The sequence spans 508 residues: Photosystem II CP47 reaction center protein (508 aa).

Helical transmembrane passes span 21–36, 101–115, 140–156, 203–218, 237–252, and 457–472; these read AVHI…WAGS, IVFS…IWHW, GIHL…FGAF, IAAG…FHLS, VLSS…AFVV, and TFAL…HGAR.

This sequence belongs to the PsbB/PsbC family. PsbB subfamily. In terms of assembly, PSII is composed of 1 copy each of membrane proteins PsbA, PsbB, PsbC, PsbD, PsbE, PsbF, PsbH, PsbI, PsbJ, PsbK, PsbL, PsbM, PsbT, PsbX, PsbY, PsbZ, Psb30/Ycf12, at least 3 peripheral proteins of the oxygen-evolving complex and a large number of cofactors. It forms dimeric complexes. Requires Binds multiple chlorophylls. PSII binds additional chlorophylls, carotenoids and specific lipids. as cofactor.

The protein localises to the plastid. The protein resides in the chloroplast thylakoid membrane. In terms of biological role, one of the components of the core complex of photosystem II (PSII). It binds chlorophyll and helps catalyze the primary light-induced photochemical processes of PSII. PSII is a light-driven water:plastoquinone oxidoreductase, using light energy to abstract electrons from H(2)O, generating O(2) and a proton gradient subsequently used for ATP formation. The chain is Photosystem II CP47 reaction center protein from Brachypodium distachyon (Purple false brome).